The sequence spans 311 residues: Mitochondrial FAD carrier protein FLX1 (311 aa).

3 Solcar repeats span residues 7 to 101 (TPLQ…TKEL), 123 to 210 (MNSL…LKQR), and 224 to 310 (LTNL…LKHR). Helical transmembrane passes span 13 to 33 (VISGLSAGSVTTLVVHPLDLL), 77 to 97 (LSINLFGNAIAWGVYFGLYGV), 129 to 149 (LSAGASSGLMTAILTNPIWVI), 183 to 203 (LWKGLVPALFGVSQGALYFAV), 230 to 250 (IEITSLGKMVSVTLVYPFQLL), and 266 to 286 (LFPLIKLIIANDGFVGLYKGL).

Belongs to the mitochondrial carrier (TC 2.A.29) family.

The protein resides in the mitochondrion inner membrane. Transport of FAD from the cytosol to the mitochondrial matrix. In Saccharomyces cerevisiae (strain ATCC 204508 / S288c) (Baker's yeast), this protein is Mitochondrial FAD carrier protein FLX1 (FLX1).